Consider the following 439-residue polypeptide: Dihydroorotase (439 aa).

His-65 and His-67 together coordinate Zn(2+). Substrate-binding positions include 67–69 (HFR) and Asn-99. Zn(2+) contacts are provided by Asp-156, His-183, His-246, and Asp-321. The active site involves Asp-321. Substrate is bound by residues His-325 and 339–340 (FG).

It belongs to the metallo-dependent hydrolases superfamily. DHOase family. Class I DHOase subfamily. It depends on Zn(2+) as a cofactor.

It catalyses the reaction (S)-dihydroorotate + H2O = N-carbamoyl-L-aspartate + H(+). The protein operates within pyrimidine metabolism; UMP biosynthesis via de novo pathway; (S)-dihydroorotate from bicarbonate: step 3/3. Catalyzes the reversible cyclization of carbamoyl aspartate to dihydroorotate. In Chlorobaculum tepidum (strain ATCC 49652 / DSM 12025 / NBRC 103806 / TLS) (Chlorobium tepidum), this protein is Dihydroorotase.